An 867-amino-acid chain; its full sequence is Cadherin-related family member 1 (867 aa).

A signal peptide spans 1 to 21 (MGRGPPAVLAPWMLFLSLAQA). Residues 22 to 701 (NFAPHFFDNG…LMQTKDNPMK (680 aa)) are Extracellular-facing. Cadherin domains lie at 36 to 135 (NGNM…APRF), 136 to 247 (IQEP…GPVF), 248 to 354 (VGTP…PPTF), 360 to 473 (PQNR…VPKF), 474 to 577 (TSHY…YPQF), and 574 to 689 (YPQF…SPMA). 2 N-linked (GlcNAc...) asparagine glycosylation sites follow: asparagine 58 and asparagine 89. Residues asparagine 288 and asparagine 297 are each glycosylated (N-linked (GlcNAc...) asparagine). Residues 702–722 (AVGVLAGIMAIIVAITVLIST) form a helical membrane-spanning segment. Topologically, residues 723–867 (ATFWRNKKSN…KKNLHSKAYF (145 aa)) are cytoplasmic. Positions 767 to 843 (KFVLREAPPN…VAKRKAVGSP (77 aa)) are disordered. Over residues 777–786 (ENCNNNSRGS) the composition is skewed to polar residues. The span at 790–802 (PQAPAPPPPPSPA) shows a compositional bias: pro residues.

Interacts with PROM1. In terms of processing, undergoes proteolytic cleavage; produces a soluble 95 kDa N-terminal fragment and a 25 kDa cell-associated C-terminal fragment. Expressed in photoreceptor cells of the outer nuclear layer of the retina.

Its subcellular location is the cell membrane. Its function is as follows. Potential calcium-dependent cell-adhesion protein. May be required for the structural integrity of the outer segment (OS) of photoreceptor cells. The polypeptide is Cadherin-related family member 1 (CDHR1) (Bos taurus (Bovine)).